Consider the following 702-residue polypeptide: Protein crooked neck (702 aa).

HAT repeat units follow at residues 56–88 (DYQQ…WEEQ), 90–122 (QEIQ…MEMK), 124–156 (KQVN…MEEM), 158–189 (ENVA…FELR), 191–222 (KEID…FEES), 224–259 (GFIH…FEEG), 261–295 (KEHD…HEKK), 305–337 (VIVS…LIEA), 339–373 (GDRD…LWIN), 383–419 (EDAE…FEIR), 454–486 (REFE…LENL), 488–522 (GDTD…FEVA), and 524–555 (GETE…FEMG). The short motif at 620–628 (PRRIKKRQK) is the Nuclear localization signal element. The disordered stretch occupies residues 670–702 (KDNTVDDPPATAIASEPEPAADAAPADTTDSGD). Residues 683–702 (ASEPEPAADAAPADTTDSGD) are compositionally biased toward low complexity.

The protein belongs to the crooked-neck family. As to quaternary structure, colocalizes with a complex containing snRNP proteins. In terms of tissue distribution, transcribed in all cells during embryonic development.

It localises to the nucleus speckle. Functionally, may be involved in pre-mRNA splicing process. Involved in embryonic neurogenesis and cell rearrangement during Malpighian tubule morphogenesis. In Drosophila melanogaster (Fruit fly), this protein is Protein crooked neck (crn).